Here is a 184-residue protein sequence, read N- to C-terminus: MRLAFVTSNPGKVEEARKYFEPLGVEVYQLKVSYPEIQADTLEEVAEYGAKWLAQRVDGPFFLDDSGLFVEALKGFPGVYSAYVYKTIGYQGILKLLQGEKNRKAHFKSVIAYWDGELHIFTGRVDGKIATEPRGSGGFGFDPIFIPEGFDRTFAEMTTEEKNRISHRGRALREFANWLKENLK.

7 to 12 (TSNPGK) serves as a coordination point for substrate. Residues glutamate 36 and aspartate 65 each coordinate Mg(2+). Residue aspartate 65 is the Proton acceptor of the active site. Residues serine 66, 139-142 (FGFD), lysine 162, and 167-168 (HR) each bind substrate.

It belongs to the HAM1 NTPase family. In terms of assembly, homodimer. Mg(2+) is required as a cofactor.

It carries out the reaction XTP + H2O = XMP + diphosphate + H(+). The enzyme catalyses dITP + H2O = dIMP + diphosphate + H(+). The catalysed reaction is ITP + H2O = IMP + diphosphate + H(+). Its function is as follows. Pyrophosphatase that catalyzes the hydrolysis of nucleoside triphosphates to their monophosphate derivatives, with a high preference for the non-canonical purine nucleotides XTP (xanthosine triphosphate), dITP (deoxyinosine triphosphate) and ITP. Seems to function as a house-cleaning enzyme that removes non-canonical purine nucleotides from the nucleotide pool, thus preventing their incorporation into DNA/RNA and avoiding chromosomal lesions. The protein is dITP/XTP pyrophosphatase of Thermococcus kodakarensis (strain ATCC BAA-918 / JCM 12380 / KOD1) (Pyrococcus kodakaraensis (strain KOD1)).